The sequence spans 216 residues: DNA-directed RNA polymerase subunit alpha (216 aa).

Belongs to the RNA polymerase alpha chain family. In plastids the minimal PEP RNA polymerase catalytic core is composed of four subunits: alpha, beta, beta', and beta''. When a (nuclear-encoded) sigma factor is associated with the core the holoenzyme is formed, which can initiate transcription.

It is found in the plastid. Its subcellular location is the chloroplast. The catalysed reaction is RNA(n) + a ribonucleoside 5'-triphosphate = RNA(n+1) + diphosphate. In terms of biological role, DNA-dependent RNA polymerase catalyzes the transcription of DNA into RNA using the four ribonucleoside triphosphates as substrates. The chain is DNA-directed RNA polymerase subunit alpha (rpoA) from Euglena gracilis.